Here is a 131-residue protein sequence, read N- to C-terminus: Large ribosomal subunit protein bL17 (131 aa).

It belongs to the bacterial ribosomal protein bL17 family. Part of the 50S ribosomal subunit. Contacts protein L32.

In Vesicomyosocius okutanii subsp. Calyptogena okutanii (strain HA), this protein is Large ribosomal subunit protein bL17.